The primary structure comprises 186 residues: Adenine phosphoribosyltransferase (186 aa).

This sequence belongs to the purine/pyrimidine phosphoribosyltransferase family. As to quaternary structure, homodimer.

The protein localises to the cytoplasm. It carries out the reaction AMP + diphosphate = 5-phospho-alpha-D-ribose 1-diphosphate + adenine. The protein operates within purine metabolism; AMP biosynthesis via salvage pathway; AMP from adenine: step 1/1. Its function is as follows. Catalyzes a salvage reaction resulting in the formation of AMP, that is energically less costly than de novo synthesis. The polypeptide is Adenine phosphoribosyltransferase (Sulfurovum sp. (strain NBC37-1)).